A 103-amino-acid chain; its full sequence is MTLRDLINKLLGRQQASAARARERLQLVLAHDRTDLSPDLLDQMREEILSVVAKYVEIDVEEGAVSLETEDRMTALVANLPIKRTLSGDIKLKEQSTESSASK.

Belongs to the MinE family.

Functionally, prevents the cell division inhibition by proteins MinC and MinD at internal division sites while permitting inhibition at polar sites. This ensures cell division at the proper site by restricting the formation of a division septum at the midpoint of the long axis of the cell. The polypeptide is Cell division topological specificity factor (Prochlorococcus marinus (strain MIT 9211)).